Reading from the N-terminus, the 336-residue chain is Terephthalate 1,2-dioxygenase, reductase component 1 (336 aa).

The 89-residue stretch at 3 to 91 (HQIHIHDSDI…DIRIQPSSFR (89 aa)) folds into the 2Fe-2S ferredoxin-type domain. Cys-37, Cys-42, Cys-45, and Cys-75 together coordinate [2Fe-2S] cluster. In terms of domain architecture, FAD-binding FR-type spans 98 to 197 (RKRFTAKVYS…ELPFGSIALK (100 aa)).

Monomer. Part of a multicomponent enzyme system composed of a reductase (TphA1I or TphA1II) and a two-subunit oxygenase component (TphA2I or TphA2II and TphA3I or TphA3II). The cofactor is FAD. Requires [2Fe-2S] cluster as cofactor.

The enzyme catalyses terephthalate + NADH + O2 + H(+) = (3S,4R)-3,4-dihydroxycyclohexa-1,5-diene-1,4-dicarboxylate + NAD(+). In terms of biological role, component of the terephthalate 1,2-dioxygenase multicomponent enzyme system which catalyzes the dioxygenation of terephthalate (TER/TPA) to 1,2-dihydroxy-3,5-cyclohexadiene-1,4-dicarboxylic acid (DCD). TphA1 probably reduces TphA2A3. It can also use 2,5-dicarboxypyridine (PDC) and 1,4-napthalenedicarboxylic acid (NDC) as substrates, and preferentially uses NADPH which is the physiological electron donor. This Comamonas sp protein is Terephthalate 1,2-dioxygenase, reductase component 1 (tphA1I).